The sequence spans 634 residues: (-)-limonene synthase, chloroplastic (634 aa).

Residues 1–21 (MSPVSAIPLAYKLCLPRSLIS) constitute a chloroplast transit peptide. Positions 348, 385, 389, 526, and 529 each coordinate (2E)-geranyl diphosphate. Mg(2+)-binding residues include Asp385 and Asp389. The DDXXD motif signature appears at 385–389 (DDIYD). Mg(2+) is bound by residues Gly529 and Asp537.

It belongs to the terpene synthase family. Tpsb subfamily. Monomer. Requires Mg(2+) as cofactor. The cofactor is Mn(2+).

It is found in the plastid. Its subcellular location is the chloroplast. The catalysed reaction is (2E)-geranyl diphosphate = (4S)-limonene + diphosphate. Its pathway is secondary metabolite biosynthesis; terpenoid biosynthesis. The protein operates within terpene metabolism; oleoresin biosynthesis. Functionally, monoterpene synthase (mono-TPS) involved in the biosynthesis of monoterpene natural products. Catalyzes the conversion of (2E)-geranyl diphosphate (GPP) into (-)-limonene. Not able to use geranylgeranyl pyrophosphate (GGPP) and farnesyl pyrophosphate (FPP) as substrates. The protein is (-)-limonene synthase, chloroplastic of Picea sitchensis (Sitka spruce).